The primary structure comprises 780 residues: MAAVDLEKLRASGAGKAIGVLTSGGDAQGMNAAVRAVTRMGIYVGAKVFLIHEGYEGLVEGGENIKQANWLSVSNIIQLGGTVIGSARCKAFTTREGRRAAAYNLVQHGITNLCVIGGDGSLTGANIFRSEWGSLLEELVAEGKISETMARTYSHLNIAGLVGSIDNDFCGTDMTIGTDSALHRIMEVIDAITTTAQSHQRTFVLEVMGRRCGYLALVSALASGADWLFIPEAPPEDGWENFMCERLGETRSRGSRLNIIIIAEGAIDRDGKPISSSYVKDLVVQRLGFDTRVTVLGHVQRGGTPSAFDRVLSSKMAMEAVMALLEATHDTPACVVTLSGNQSVRLPLMECVQMTKEVQKAMDDKRFDEAIQLRGGSFENNWNIYKLLAHQKPPKEKSNFSLAILNVGAPAAGMNAAVRSAVRTGISHGHTVYVVHDGFEGLAKGQVQEVGWHDVAGWLGRGGSMLGTKRTLPKGQLESIVENIRIYGIHALLVVGGFEAYEGVLQLVEARGRYEELCIVMCVIPATISNNVPGTDFSLGSDTAVNAAMESCDRIKQSASGTKRRVFIVETMGGYCGYLATVTGIAVGADAAYVFEDPFNIHDLKVNVEHMTEKMKTDIQRGLVLRNEKCHDYYTTEFLYNLYSSEGKGVFDCRTNVLGHLQQGGAPTPFDRNYGTKLGVKAMLWLSEKLRDVYRKGRVFANAPDSACVIGLKKKAVAFSPVTELKKDTDFEHRMPREQWWLSLRLMLKMLAQYRISMAAYVSGELEHVTRRTLSMDKGF.

At alanine 2 the chain carries N-acetylalanine. The tract at residues 2 to 390 (AAVDLEKLRA…NWNIYKLLAH (389 aa)) is N-terminal catalytic PFK domain 1. Residues glycine 25, 88-89 (RC), and 118-121 (GDGS) contribute to the ATP site. Residue aspartate 119 coordinates Mg(2+). Substrate is bound by residues 164–166 (SID), arginine 201, 208–210 (MGR), glutamate 264, arginine 292, and 298–301 (HVQR). Aspartate 166 (proton acceptor) is an active-site residue. Position 377 is a phosphoserine (serine 377). An interdomain linker region spans residues 391-400 (QKPPKEKSNF). The C-terminal regulatory PFK domain 2 stretch occupies residues 401–780 (SLAILNVGAP…RRTLSMDKGF (380 aa)). Residues arginine 470, 527–531 (TISNN), arginine 565, 572–574 (MGG), and glutamate 628 each bind beta-D-fructose 2,6-bisphosphate. Serine 529 carries an O-linked (GlcNAc) serine glycan. Tyrosine 640 is modified (phosphotyrosine). Beta-D-fructose 2,6-bisphosphate is bound by residues arginine 654, 660–663 (HLQQ), and arginine 734. Serine 775 is subject to Phosphoserine.

It belongs to the phosphofructokinase type A (PFKA) family. ATP-dependent PFK group I subfamily. Eukaryotic two domain clade 'E' sub-subfamily. Homo- and heterotetramers. Phosphofructokinase (PFK) enzyme functions as a tetramer composed of different combinations of 3 types of subunits, called PFKM (M), PFKL (L) and PFKP (P). The composition of the PFK tetramer differs according to the tissue type it is present in. The kinetic and regulatory properties of the tetrameric enzyme are dependent on the subunit composition, hence can vary across tissues. It depends on Mg(2+) as a cofactor. In terms of processing, glcNAcylation at Ser-529 by OGT decreases enzyme activity, leading to redirect glucose flux through the oxidative pentose phosphate pathway. Glycosylation is stimulated by both hypoxia and glucose deprivation.

The protein localises to the cytoplasm. It catalyses the reaction beta-D-fructose 6-phosphate + ATP = beta-D-fructose 1,6-bisphosphate + ADP + H(+). The protein operates within carbohydrate degradation; glycolysis; D-glyceraldehyde 3-phosphate and glycerone phosphate from D-glucose: step 3/4. Its activity is regulated as follows. Allosterically activated by ADP, AMP, or fructose 2,6-bisphosphate, and allosterically inhibited by ATP or citrate. GlcNAcylation by OGT overcomes allosteric regulation. Catalyzes the phosphorylation of D-fructose 6-phosphate to fructose 1,6-bisphosphate by ATP, the first committing step of glycolysis. Negatively regulates the phagocyte oxidative burst in response to bacterial infection by controlling cellular NADPH biosynthesis and NADPH oxidase-derived reactive oxygen species. Upon macrophage activation, drives the metabolic switch toward glycolysis, thus preventing glucose turnover that produces NADPH via pentose phosphate pathway. The protein is ATP-dependent 6-phosphofructokinase, liver type (PFKL) of Pongo abelii (Sumatran orangutan).